An 821-amino-acid polypeptide reads, in one-letter code: Centrosomal protein of 95 kDa (821 aa).

Disordered regions lie at residues 310-354 (TLCK…FPQK), 390-474 (ATGE…DTHH), and 514-550 (KEAFAKGTTKQSQVQKIYSRKTAAPTPKGGLLKSSKA). 2 stretches are compositionally biased toward basic and acidic residues: residues 325–340 (ESSKTRRLSKGERSEN) and 390–410 (ATGEAHGKDGGAGDEEAHSAN). The span at 427-441 (RKPRPGFSMHRKAPY) shows a compositional bias: basic residues. Phosphoserine occurs at positions 445, 447, and 449. Coiled coils occupy residues 578-627 (LTKM…VKKE) and 695-789 (LQIQ…DDDA).

Its subcellular location is the cytoplasm. The protein resides in the cytoskeleton. It is found in the microtubule organizing center. It localises to the centrosome. The protein localises to the spindle pole. The protein is Centrosomal protein of 95 kDa (Cep95) of Rattus norvegicus (Rat).